A 201-amino-acid polypeptide reads, in one-letter code: MSSDGMNRDVSNSKPNVRFAAPQRLSVAHPAISSPLHMPMSKSSRKPLVRTKIRLDPGHSALDWHSLTSNPANYYTKFVSLQLIQDLLDDPVFQKDNFKFSPSQLKNQLLVQKIPLYKIMPPLRINRKIVKKHCKGEDELWCVINGKVYDISSYLKFHPGGTDILIKHRNSDDLITYFNKYHQWVNYEKLLQVCFIGVVCE.

A Cytochrome b5 heme-binding domain is found at 122–200 (PLRINRKIVK…LQVCFIGVVC (79 aa)). 2 residues coordinate heme: histidine 158 and histidine 182.

This sequence belongs to the cytochrome b5 family.

Its function is as follows. Involved in resistance to carboplatin and cisplatin. Is probably involved in a pathway contributing to genomic integrity. The sequence is that of Increased recombination centers protein 21 (IRC21) from Saccharomyces cerevisiae (strain ATCC 204508 / S288c) (Baker's yeast).